The following is a 138-amino-acid chain: ATP synthase epsilon chain (138 aa).

Belongs to the ATPase epsilon chain family. As to quaternary structure, F-type ATPases have 2 components, CF(1) - the catalytic core - and CF(0) - the membrane proton channel. CF(1) has five subunits: alpha(3), beta(3), gamma(1), delta(1), epsilon(1). CF(0) has three main subunits: a, b and c.

The protein resides in the cell inner membrane. In terms of biological role, produces ATP from ADP in the presence of a proton gradient across the membrane. The polypeptide is ATP synthase epsilon chain (Geotalea uraniireducens (strain Rf4) (Geobacter uraniireducens)).